We begin with the raw amino-acid sequence, 147 residues long: Urease accessory protein UreE (147 aa).

The protein belongs to the UreE family.

The protein localises to the cytoplasm. Involved in urease metallocenter assembly. Binds nickel. Probably functions as a nickel donor during metallocenter assembly. In Nostoc sp. (strain PCC 7120 / SAG 25.82 / UTEX 2576), this protein is Urease accessory protein UreE.